The chain runs to 308 residues: Olfactory receptor 4N5 (308 aa).

At 1 to 25 the chain is on the extracellular side; it reads METQNLTVVTEFILLGLTQSQDAQL. N-linked (GlcNAc...) asparagine glycosylation occurs at N5. The helical transmembrane segment at 26–49 threads the bilayer; sequence LVFVLVLIFYLIILPGNFLIIFTI. The Cytoplasmic portion of the chain corresponds to 50-57; sequence KSDPGLTA. A helical transmembrane segment spans residues 58-79; the sequence is PLYFFLGNLALLDASYSFIVVP. Topologically, residues 80-100 are extracellular; the sequence is RMLVDFLSEKKVISYRSCITQ. The cysteines at positions 97 and 189 are disulfide-linked. A helical transmembrane segment spans residues 101–120; that stretch reads LFFLHFLGAGEMFLLVVMAF. Residues 121-139 lie on the Cytoplasmic side of the membrane; it reads DRYIAICRPLHYSTIMNPR. A helical membrane pass occupies residues 140 to 158; it reads ACYALSLVLWLGGFIHSIV. The Extracellular segment spans residues 159–195; that stretch reads QVALILHLPFCGPNQLDNFFCDVPQVIKLACTNTFVV. Residues 196–219 traverse the membrane as a helical segment; the sequence is ELLMVSNSGLLSLLCFLGLLASYA. Over 220–235 the chain is Cytoplasmic; the sequence is VILCRIREHSSEGKSK. Residues 236–258 form a helical membrane-spanning segment; sequence AISTCTTHIIIIFLMFGPAIFIY. Topologically, residues 259 to 269 are extracellular; it reads TCPFQAFPADK. The chain crosses the membrane as a helical span at residues 270-289; it reads VVSLFHTVIFPLMNPVIYTL. Residues 290 to 308 lie on the Cytoplasmic side of the membrane; the sequence is RNQEVKASMRKLLSQHMFC.

This sequence belongs to the G-protein coupled receptor 1 family.

Its subcellular location is the cell membrane. Functionally, odorant receptor. This Homo sapiens (Human) protein is Olfactory receptor 4N5 (OR4N5).